Consider the following 715-residue polypeptide: MDMTSAFTLNVRLDNVAVVSIDVPGEKMNTLKAEFATQVRAILKQIRENKALRGVVFISAKPDNFIAGADINMIGNCKSAQEAETLARQGQQIMAEIQALSVPVVAAIHGACLGGGLEMALACHRRICTDDAKTVLGLPEVQLGLLPGSGGTQRLPRLVGVSTALDMILTGKQLRPKQALRVGLVDEVVPHAILLEAAVELAIKGRSAQRNLPVRERILAGPLGRTLLFRMVSKKTGQKTQGNYPATERILEVIETGLAQGSSSGYDAEARAFGELAMTPQSQALRNIFFASTEVKKDPGSDAQPGPLASVGVLGGGLMGGGIAYVTACKGGLSVRIKDINAKGINHALKYSWDQLETKVRRRHIKAGERDKQLALISGSTDYRGFSHRDLVIEAVFEDLALKQQMVAEVEQNCAPHTIFASNTSSLPIGDIAANAARPEQVIGLHFFSPVEKMPLVEVIPHATTSAQTIATTVKLAKKQGKTPIVVSDKAGFYVNRILAPYINEAIRLLTEGERVEAIDAALVKFGFPVGPIQLLDEVGIDTGTKIIPVLEAAYGERFSAPANVVASILNDDRKGRKNGRGFYLYGVKGRKSKKQVDPAIYRLIGTQGQSRLSAQQMAERCVMLMLNEAARCFDEKVIRSARDGDIGAVFGIGFPPFLGGPFRYMDTLGAGEVVAVLQRLATQYGDRFTPCERLLRMAERGERFWNSGETDLKE.

The tract at residues M1–P190 is enoyl-CoA hydratase. The tract at residues G306 to E715 is 3-hydroxyacyl-CoA dehydrogenase.

This sequence in the N-terminal section; belongs to the enoyl-CoA hydratase/isomerase family. The protein in the central section; belongs to the 3-hydroxyacyl-CoA dehydrogenase family. As to quaternary structure, heterotetramer of two alpha chains (FadJ) and two beta chains (FadI).

It localises to the cytoplasm. It carries out the reaction a (3S)-3-hydroxyacyl-CoA = a (2E)-enoyl-CoA + H2O. It catalyses the reaction a 4-saturated-(3S)-3-hydroxyacyl-CoA = a (3E)-enoyl-CoA + H2O. The enzyme catalyses a (3S)-3-hydroxyacyl-CoA + NAD(+) = a 3-oxoacyl-CoA + NADH + H(+). The catalysed reaction is (3S)-3-hydroxybutanoyl-CoA = (3R)-3-hydroxybutanoyl-CoA. It functions in the pathway lipid metabolism; fatty acid beta-oxidation. Its function is as follows. Catalyzes the formation of a hydroxyacyl-CoA by addition of water on enoyl-CoA. Also exhibits 3-hydroxyacyl-CoA epimerase and 3-hydroxyacyl-CoA dehydrogenase activities. This chain is Fatty acid oxidation complex subunit alpha, found in Citrobacter koseri (strain ATCC BAA-895 / CDC 4225-83 / SGSC4696).